A 388-amino-acid chain; its full sequence is MTQFTLADRLATLPPYLFAQIDKVKAEVAARGVDIISLGIGDPDMPTPDFVIEALKKAAEKPANHQYPSYTGMLAFRQEVANWYKRRYAVELDPKTEVLTLIGSKEGIAHFPTAFVNPGDLVLVCPPCYPVYAIASRFMGGVVQELPLLEENDFLPDLDAVDEATWEKARCIFVNYPNNPTAAMAPRSFFEKLIGIARKHNVIVVHDAAYTEMYYNENNRPLSIMEIPGAMDVAIEFNSLSKPYNMTGWRIAMAVGNASLVAGLGKVKENMDSGAFQAVQEAAIVALRDGDAFLAEIRDIYRKRRDTVIAALNKIGITCRVPEASLYVWARVPEGYTSSDFVTRVLQETGVVMTPGNGFGAAGEGYFRISLTVNDERLEEAVSRIASL.

The substrate site is built by Tyr16 and Gly41. Pyridoxal 5'-phosphate-binding positions include Tyr70, 104-105 (SK), Tyr129, Asn179, Tyr210, and 239-241 (SLS). 3 residues coordinate substrate: Lys105, Tyr129, and Asn179. Residue Lys242 is modified to N6-(pyridoxal phosphate)lysine. Arg250 is a pyridoxal 5'-phosphate binding site. Position 368 (Arg368) interacts with substrate.

It belongs to the class-I pyridoxal-phosphate-dependent aminotransferase family. LL-diaminopimelate aminotransferase subfamily. In terms of assembly, homodimer. Pyridoxal 5'-phosphate is required as a cofactor.

The catalysed reaction is (2S,6S)-2,6-diaminopimelate + 2-oxoglutarate = (S)-2,3,4,5-tetrahydrodipicolinate + L-glutamate + H2O + H(+). It functions in the pathway amino-acid biosynthesis; L-lysine biosynthesis via DAP pathway; LL-2,6-diaminopimelate from (S)-tetrahydrodipicolinate (aminotransferase route): step 1/1. Involved in the synthesis of meso-diaminopimelate (m-DAP or DL-DAP), required for both lysine and peptidoglycan biosynthesis. Catalyzes the direct conversion of tetrahydrodipicolinate to LL-diaminopimelate. In Oleidesulfovibrio alaskensis (strain ATCC BAA-1058 / DSM 17464 / G20) (Desulfovibrio alaskensis), this protein is LL-diaminopimelate aminotransferase.